Reading from the N-terminus, the 432-residue chain is Tol-Pal system protein TolB (432 aa).

The first 21 residues, 1-21, serve as a signal peptide directing secretion; it reads MKHVRIFATLLALLVISVTPA.

It belongs to the TolB family. In terms of assembly, the Tol-Pal system is composed of five core proteins: the inner membrane proteins TolA, TolQ and TolR, the periplasmic protein TolB and the outer membrane protein Pal. They form a network linking the inner and outer membranes and the peptidoglycan layer.

The protein localises to the periplasm. In terms of biological role, part of the Tol-Pal system, which plays a role in outer membrane invagination during cell division and is important for maintaining outer membrane integrity. This chain is Tol-Pal system protein TolB, found in Geobacter sulfurreducens (strain ATCC 51573 / DSM 12127 / PCA).